The chain runs to 266 residues: MAVITMIEAQKRSGRYNVYLDGAYAFPVSESVLVDFRLAKGMEVDKALTAQLIDADNVAKAYNRALDYLSQQLRTEKEVRDKLADLEIPAETIAATLQRLRSLALVDDAHYAASYVRTMMHTGDKGPRVIRQNLRHKGVLEQPIDEALTLYTTEEQLTVGTAVAAKLAKRYQRQPFGTQQQKIRQGLLTRGFDNDLATKMLATLDLTPDEDEQWALLVKQGEKLWHRYRTLSMRERQYKTKQALYRKGFNLDDISRWLADLGESAQ.

It belongs to the RecX family.

The protein resides in the cytoplasm. Modulates RecA activity. In Levilactobacillus brevis (strain ATCC 367 / BCRC 12310 / CIP 105137 / JCM 1170 / LMG 11437 / NCIMB 947 / NCTC 947) (Lactobacillus brevis), this protein is Regulatory protein RecX.